The chain runs to 1129 residues: Ubiquitin carboxyl-terminal hydrolase 7 (1129 aa).

The MATH domain maps to 29 to 169 (EGHLALDIER…DDVIRLRCRF (141 aa)). The USP domain occupies 190-500 (IGLRNQGATC…SAYMLVYVRD (311 aa)). Cys-199 serves as the catalytic Nucleophile. His-439 functions as the Proton acceptor in the catalytic mechanism.

Belongs to the peptidase C19 family.

Its subcellular location is the nucleus. It catalyses the reaction Thiol-dependent hydrolysis of ester, thioester, amide, peptide and isopeptide bonds formed by the C-terminal Gly of ubiquitin (a 76-residue protein attached to proteins as an intracellular targeting signal).. In terms of biological role, hydrolase that deubiquitinates target proteins. This is Ubiquitin carboxyl-terminal hydrolase 7 from Caenorhabditis briggsae.